Here is a 620-residue protein sequence, read N- to C-terminus: KIF-binding protein (620 aa).

Coiled coils occupy residues 30–64 (YKSK…QDIL) and 133–169 (LIKS…QLQN).

This sequence belongs to the KIF-binding protein family.

It is found in the cytoplasm. It localises to the cytoskeleton. In terms of biological role, activator of KIF1B plus-end-directed microtubule motor activity. Required for organization of axonal microtubules, and axonal outgrowth and maintenance during peripheral and central nervous system development. This is KIF-binding protein (kifbp) from Dictyostelium discoideum (Social amoeba).